Here is a 297-residue protein sequence, read N- to C-terminus: 4-hydroxy-tetrahydrodipicolinate synthase (297 aa).

Pyruvate is bound at residue Thr47. The Proton donor/acceptor role is filled by Tyr135. Residue Lys163 is the Schiff-base intermediate with substrate of the active site. Ile205 provides a ligand contact to pyruvate.

The protein belongs to the DapA family. In terms of assembly, homotetramer; dimer of dimers.

The protein localises to the cytoplasm. It catalyses the reaction L-aspartate 4-semialdehyde + pyruvate = (2S,4S)-4-hydroxy-2,3,4,5-tetrahydrodipicolinate + H2O + H(+). The protein operates within amino-acid biosynthesis; L-lysine biosynthesis via DAP pathway; (S)-tetrahydrodipicolinate from L-aspartate: step 3/4. Functionally, catalyzes the condensation of (S)-aspartate-beta-semialdehyde [(S)-ASA] and pyruvate to 4-hydroxy-tetrahydrodipicolinate (HTPA). This Dehalococcoides mccartyi (strain ATCC BAA-2266 / KCTC 15142 / 195) (Dehalococcoides ethenogenes (strain 195)) protein is 4-hydroxy-tetrahydrodipicolinate synthase.